The primary structure comprises 222 residues: Glutathione S-transferase A1 (222 aa).

An N-acetylmethionine modification is found at M1. A2 carries the post-translational modification N-acetylalanine; in Glutathione S-transferase A1, N-terminally processed. The 81-residue stretch at 3-83 folds into the GST N-terminal domain; the sequence is EKPKLHYFNA…YIASKYNLYG (81 aa). At K4 the chain carries N6-succinyllysine. Glutathione is bound by residues Y9, R45, 54 to 55, and 67 to 68; these read QV and QT. The GST C-terminal domain maps to 85–207; sequence DIKERALIDM…LQPGSPRKPP (123 aa).

It belongs to the GST superfamily. Alpha family. As to quaternary structure, homodimer or heterodimer of GSTA1 and GSTA2. As to expression, liver.

It is found in the cytoplasm. The catalysed reaction is RX + glutathione = an S-substituted glutathione + a halide anion + H(+). It carries out the reaction prostaglandin A2 + glutathione = prostaglandin A2-S-(R)-glutathione. The enzyme catalyses prostaglandin J2 + glutathione = prostaglandin J2-S-(R)-glutathione. It catalyses the reaction (13S)-hydroperoxy-(9Z,11E)-octadecadienoate + 2 glutathione = (13S)-hydroxy-(9Z,11E)-octadecadienoate + glutathione disulfide + H2O. The catalysed reaction is androst-5-ene-3,17-dione = androst-4-ene-3,17-dione. With respect to regulation, the isomerase activity is inhibited by S-methylglutathione (GSMe). Functionally, glutathione S-transferase that catalyzes the nucleophilic attack of the sulfur atom of glutathione on the electrophilic groups of a wide range of exogenous and endogenous compounds. Involved in the formation of glutathione conjugates of both prostaglandin A2 (PGA2) and prostaglandin J2 (PGJ2). It also catalyzes the isomerization of D5-androstene-3,17-dione (AD) into D4-androstene-3,17-dione and may therefore play an important role in hormone biosynthesis. Through its glutathione-dependent peroxidase activity toward the fatty acid hydroperoxide (13S)-hydroperoxy-(9Z,11E)-octadecadienoate/13-HPODE it is also involved in the metabolism of oxidized linoleic acid. In Homo sapiens (Human), this protein is Glutathione S-transferase A1 (GSTA1).